Reading from the N-terminus, the 458-residue chain is MKLWGGRFEKNTDKSVDDFNSSIRFDCRMYKQDILGSIAHAKMLGKCKIISEEDSILIQNTLREILKDIEEGKVQFEIDAEDIHMNVEKILISRIGDVGKKLHTGRSRNDQVALDIRMYLRDEVVEIRKLLVNLERTLIEIAKNNIDTILPGYTHLQRAQPITFAHHMMAYFQMFKRDIERLNDCYKRINVMPLGSGALASTTYPLDRYMVAKELGFDSITENSLDAVSDRDFVIELSACLSILMMHLSRFSEEIILWASHEFGFIELDDAYSTGSSIMPQKKNPDVAELVRGKTGRVYGDLMALLSVMKSLPLAYNKDMQEDKEAIFDAVDTVKMCLPVFTKMIETMKIKKENMLRAAQGGFTNATDMADYLVKKGIPFRNAHEIIGKMVLYCIENNKAIEELDMSEFKSFSELIEEDVYEEISLSKCVSGRNLPGGPAKESVMASIENGLKFLSTQ.

This sequence belongs to the lyase 1 family. Argininosuccinate lyase subfamily.

It localises to the cytoplasm. It carries out the reaction 2-(N(omega)-L-arginino)succinate = fumarate + L-arginine. It participates in amino-acid biosynthesis; L-arginine biosynthesis; L-arginine from L-ornithine and carbamoyl phosphate: step 3/3. This chain is Argininosuccinate lyase, found in Acetivibrio thermocellus (strain ATCC 27405 / DSM 1237 / JCM 9322 / NBRC 103400 / NCIMB 10682 / NRRL B-4536 / VPI 7372) (Clostridium thermocellum).